A 99-amino-acid chain; its full sequence is Protein 7.3 (99 aa).

The interval 59–99 (VPEKEVSTEDEAQTESGRKKARAGGKKSLSVARSSGGGINI) is disordered.

This sequence belongs to the T7likevirus protein 7.3 family.

Its subcellular location is the virion. Functionally, plays an essential role most probably in virion tail assembly. May form a scaffold around which gp11 and gp12 polymerize. Gets ejected from the infecting particle into the bacterial cell. The chain is Protein 7.3 from Escherichia phage T7 (Bacteriophage T7).